A 262-amino-acid chain; its full sequence is Indole-3-glycerol phosphate synthase (262 aa).

It belongs to the TrpC family.

The enzyme catalyses 1-(2-carboxyphenylamino)-1-deoxy-D-ribulose 5-phosphate + H(+) = (1S,2R)-1-C-(indol-3-yl)glycerol 3-phosphate + CO2 + H2O. It participates in amino-acid biosynthesis; L-tryptophan biosynthesis; L-tryptophan from chorismate: step 4/5. The protein is Indole-3-glycerol phosphate synthase of Thiobacillus denitrificans (strain ATCC 25259 / T1).